Consider the following 70-residue polypeptide: DNA gyrase inhibitor YacG (70 aa).

Zn(2+) is bound by residues Cys9, Cys12, Cys28, and Cys32. The disordered stretch occupies residues 44 to 70 (SRKIPGSSIDPESIVTTNNKQDNVDEQ).

This sequence belongs to the DNA gyrase inhibitor YacG family. Interacts with GyrB. It depends on Zn(2+) as a cofactor.

Its function is as follows. Inhibits all the catalytic activities of DNA gyrase by preventing its interaction with DNA. Acts by binding directly to the C-terminal domain of GyrB, which probably disrupts DNA binding by the gyrase. The sequence is that of DNA gyrase inhibitor YacG from Legionella pneumophila subsp. pneumophila (strain Philadelphia 1 / ATCC 33152 / DSM 7513).